A 188-amino-acid chain; its full sequence is MPDRNIVVLTAPSGAGKTTIAHRVLEAMPDMQFSVSATTRAARPDETDGVDYHFLSPEEFRARIDAGDLLEYEEVYPDQFYGTLRSEVEDRAEDGPVLLDIDVKGALNVKRIFGDDALILFVAPPSLDELQRRLEGRGTEDRESLQDRLDRVEQEMDRADDCDAVVVNDDLDPAVEETLTRIRQFLSS.

The Guanylate kinase-like domain maps to 4 to 183 (RNIVVLTAPS…AVEETLTRIR (180 aa)). 11 to 18 (APSGAGKT) contacts ATP.

Belongs to the guanylate kinase family.

Its subcellular location is the cytoplasm. The enzyme catalyses GMP + ATP = GDP + ADP. In terms of biological role, essential for recycling GMP and indirectly, cGMP. This is Guanylate kinase from Salinibacter ruber (strain DSM 13855 / M31).